The sequence spans 156 residues: Endoribonuclease YbeY (156 aa).

Positions 115, 119, and 125 each coordinate Zn(2+).

The protein belongs to the endoribonuclease YbeY family. Zn(2+) is required as a cofactor.

The protein localises to the cytoplasm. Single strand-specific metallo-endoribonuclease involved in late-stage 70S ribosome quality control and in maturation of the 3' terminus of the 16S rRNA. This chain is Endoribonuclease YbeY, found in Mannheimia succiniciproducens (strain KCTC 0769BP / MBEL55E).